The primary structure comprises 258 residues: Imidazole glycerol phosphate synthase subunit HisF (258 aa).

Residues Asp11 and Asp130 contribute to the active site.

It belongs to the HisA/HisF family. In terms of assembly, heterodimer of HisH and HisF.

It is found in the cytoplasm. It carries out the reaction 5-[(5-phospho-1-deoxy-D-ribulos-1-ylimino)methylamino]-1-(5-phospho-beta-D-ribosyl)imidazole-4-carboxamide + L-glutamine = D-erythro-1-(imidazol-4-yl)glycerol 3-phosphate + 5-amino-1-(5-phospho-beta-D-ribosyl)imidazole-4-carboxamide + L-glutamate + H(+). It participates in amino-acid biosynthesis; L-histidine biosynthesis; L-histidine from 5-phospho-alpha-D-ribose 1-diphosphate: step 5/9. Its function is as follows. IGPS catalyzes the conversion of PRFAR and glutamine to IGP, AICAR and glutamate. The HisF subunit catalyzes the cyclization activity that produces IGP and AICAR from PRFAR using the ammonia provided by the HisH subunit. The sequence is that of Imidazole glycerol phosphate synthase subunit HisF from Klebsiella pneumoniae (strain 342).